Consider the following 440-residue polypeptide: Glyceraldehyde-3-phosphate dehydrogenase, testis-specific (440 aa).

Residues 1–105 form a testis-specific N-terminal extension region; that stretch reads MSRRDVVLTN…PPPPPLQKPA (105 aa). Composition is skewed to pro residues over residues 40–75 and 83–102; these read PPKLEDPPPTVEEQPPPPPPPPPPPPPPPPPPPPQI and APPPPPPPPPPPPPPPPPLQ. The segment at 40-106 is disordered; sequence PPKLEDPPPT…PPPPLQKPAR (67 aa). NAD(+)-binding positions include 117–118, Asp-138, Lys-183, Tyr-205, and Thr-225; that span reads RI. D-glyceraldehyde 3-phosphate-binding positions include 255 to 257, Thr-286, 315 to 316, and Arg-338; these read SCT and TG. Cys-256 functions as the Nucleophile in the catalytic mechanism. The residue at position 358 (Ser-358) is a Phosphoserine. Residue Asn-420 participates in NAD(+) binding.

This sequence belongs to the glyceraldehyde-3-phosphate dehydrogenase family. Homotetramer. In terms of tissue distribution, testis specific.

The protein resides in the cytoplasm. It carries out the reaction D-glyceraldehyde 3-phosphate + phosphate + NAD(+) = (2R)-3-phospho-glyceroyl phosphate + NADH + H(+). It participates in carbohydrate degradation; glycolysis; pyruvate from D-glyceraldehyde 3-phosphate: step 1/5. May play an important role in regulating the switch between different pathways for energy production during spermiogenesis and in the spermatozoon. Required for sperm motility and male fertility. This is Glyceraldehyde-3-phosphate dehydrogenase, testis-specific (Gapdhs) from Mus musculus (Mouse).